Consider the following 433-residue polypeptide: Protein FAM98B (433 aa).

Residues 303–433 (GRVPDRGGRP…GGGGGGYRRY (131 aa)) are disordered. The span at 305 to 314 (VPDRGGRPNE) shows a compositional bias: basic and acidic residues. Residues 331-433 (GGGGRGGWGG…GGGGGGYRRY (103 aa)) show a composition bias toward gly residues.

This sequence belongs to the FAM98 family. As to quaternary structure, homodimer. Component of the tRNA-splicing ligase complex. Interacts with FAM98A. In terms of tissue distribution, expressed strongly in colorectal cancer tissues compared to wild-type colon samples (at protein level). Expressed strongly in colorectal cancer tissues compared to wild-type colon samples.

The protein localises to the nucleus. It localises to the cytoplasm. Functionally, positively stimulates PRMT1-induced protein arginine dimethylated arginine methylation. The chain is Protein FAM98B (FAM98B) from Homo sapiens (Human).